The following is a 293-amino-acid chain: tRNA pseudouridine synthase B (293 aa).

The active-site Nucleophile is D38.

This sequence belongs to the pseudouridine synthase TruB family. Type 1 subfamily.

The enzyme catalyses uridine(55) in tRNA = pseudouridine(55) in tRNA. In terms of biological role, responsible for synthesis of pseudouridine from uracil-55 in the psi GC loop of transfer RNAs. The sequence is that of tRNA pseudouridine synthase B from Trichormus variabilis (strain ATCC 29413 / PCC 7937) (Anabaena variabilis).